Consider the following 146-residue polypeptide: D-aminoacyl-tRNA deacylase (146 aa).

Residues 138-139 (GP) carry the Gly-cisPro motif, important for rejection of L-amino acids motif.

The protein belongs to the DTD family. In terms of assembly, homodimer.

Its subcellular location is the cytoplasm. The catalysed reaction is glycyl-tRNA(Ala) + H2O = tRNA(Ala) + glycine + H(+). It catalyses the reaction a D-aminoacyl-tRNA + H2O = a tRNA + a D-alpha-amino acid + H(+). Its function is as follows. An aminoacyl-tRNA editing enzyme that deacylates mischarged D-aminoacyl-tRNAs. Also deacylates mischarged glycyl-tRNA(Ala), protecting cells against glycine mischarging by AlaRS. Acts via tRNA-based rather than protein-based catalysis; rejects L-amino acids rather than detecting D-amino acids in the active site. By recycling D-aminoacyl-tRNA to D-amino acids and free tRNA molecules, this enzyme counteracts the toxicity associated with the formation of D-aminoacyl-tRNA entities in vivo and helps enforce protein L-homochirality. The protein is D-aminoacyl-tRNA deacylase of Stenotrophomonas maltophilia (strain R551-3).